Here is a 270-residue protein sequence, read N- to C-terminus: Putative pyruvate, phosphate dikinase regulatory protein (270 aa).

Residue 148-155 coordinates ADP; it reads GISRTSKT.

This sequence belongs to the pyruvate, phosphate/water dikinase regulatory protein family. PDRP subfamily.

It catalyses the reaction N(tele)-phospho-L-histidyl/L-threonyl-[pyruvate, phosphate dikinase] + ADP = N(tele)-phospho-L-histidyl/O-phospho-L-threonyl-[pyruvate, phosphate dikinase] + AMP + H(+). It carries out the reaction N(tele)-phospho-L-histidyl/O-phospho-L-threonyl-[pyruvate, phosphate dikinase] + phosphate + H(+) = N(tele)-phospho-L-histidyl/L-threonyl-[pyruvate, phosphate dikinase] + diphosphate. Its function is as follows. Bifunctional serine/threonine kinase and phosphorylase involved in the regulation of the pyruvate, phosphate dikinase (PPDK) by catalyzing its phosphorylation/dephosphorylation. This is Putative pyruvate, phosphate dikinase regulatory protein from Bacillus cereus (strain AH187).